The primary structure comprises 155 residues: Endoribonuclease YbeY (155 aa).

Zn(2+) contacts are provided by H114, H118, and H124.

It belongs to the endoribonuclease YbeY family. Zn(2+) is required as a cofactor.

The protein resides in the cytoplasm. Functionally, single strand-specific metallo-endoribonuclease involved in late-stage 70S ribosome quality control and in maturation of the 3' terminus of the 16S rRNA. This is Endoribonuclease YbeY from Baumannia cicadellinicola subsp. Homalodisca coagulata.